The chain runs to 876 residues: Valine--tRNA ligase (876 aa).

The short motif at 44-54 is the 'HIGH' region element; it reads PNVTGKLHLGH. The short motif at 520–524 is the 'KMSKS' region element; that stretch reads KMSKS. Position 523 (K523) interacts with ATP. Residues 805 to 876 adopt a coiled-coil conformation; the sequence is LEGLIDMDKE…VKARIEQLKA (72 aa).

This sequence belongs to the class-I aminoacyl-tRNA synthetase family. ValS type 1 subfamily. In terms of assembly, monomer.

Its subcellular location is the cytoplasm. It catalyses the reaction tRNA(Val) + L-valine + ATP = L-valyl-tRNA(Val) + AMP + diphosphate. Functionally, catalyzes the attachment of valine to tRNA(Val). As ValRS can inadvertently accommodate and process structurally similar amino acids such as threonine, to avoid such errors, it has a 'posttransfer' editing activity that hydrolyzes mischarged Thr-tRNA(Val) in a tRNA-dependent manner. The polypeptide is Valine--tRNA ligase (Staphylococcus aureus (strain JH1)).